The primary structure comprises 273 residues: 3-methyl-2-oxobutanoate hydroxymethyltransferase 3 (273 aa).

Residues D49 and D88 each contribute to the Mg(2+) site. 3-methyl-2-oxobutanoate is bound by residues 49–50, D88, and K118; that span reads DS. Residue E120 participates in Mg(2+) binding. E187 functions as the Proton acceptor in the catalytic mechanism.

Belongs to the PanB family. As to quaternary structure, homodecamer; pentamer of dimers. The cofactor is Mg(2+).

The protein localises to the cytoplasm. It catalyses the reaction 3-methyl-2-oxobutanoate + (6R)-5,10-methylene-5,6,7,8-tetrahydrofolate + H2O = 2-dehydropantoate + (6S)-5,6,7,8-tetrahydrofolate. It functions in the pathway cofactor biosynthesis; (R)-pantothenate biosynthesis; (R)-pantoate from 3-methyl-2-oxobutanoate: step 1/2. Its function is as follows. Catalyzes the reversible reaction in which hydroxymethyl group from 5,10-methylenetetrahydrofolate is transferred onto alpha-ketoisovalerate to form ketopantoate. In Bradyrhizobium diazoefficiens (strain JCM 10833 / BCRC 13528 / IAM 13628 / NBRC 14792 / USDA 110), this protein is 3-methyl-2-oxobutanoate hydroxymethyltransferase 3.